The sequence spans 131 residues: Capsid protein (131 aa).

Ca(2+)-binding residues include Gln2 and Tyr131.

It belongs to the Leviviricetes capsid protein family. Homodimer. The capsid proteins form dimers that assemble by group of 5. Twelve such pentamers are linked together with free dimers. The homodimers binds to the viral RNA via an operator hairpin, but also to many other RNA sequences in the viral genome; this interaction probably shifts the virus from the replicative to the assembly phase and ensures specific encapsidation of the viral genome.

Its subcellular location is the virion. In terms of biological role, capsid protein self-assembles to form an icosahedral capsid with a T=3 symmetry, about 26 nm in diameter, and consisting of 89 capsid proteins dimers (178 capsid proteins). Involved in viral genome encapsidation through the interaction between a capsid protein dimer and the multiple packaging signals present in the RNA genome. The capsid also contains 1 copy of the A2 maturation protein. Functionally, acts as a translational repressor of viral replicase synthesis late in infection. This latter function is the result of capsid protein interaction with an RNA hairpin which contains the replicase ribosome-binding site. This chain is Capsid protein, found in Pseudomonas phage PRR1 (Bacteriophage PRR1).